A 419-amino-acid chain; its full sequence is UDP-N-acetylglucosamine 1-carboxyvinyltransferase (419 aa).

22-23 (KN) provides a ligand contact to phosphoenolpyruvate. A UDP-N-acetyl-alpha-D-glucosamine-binding site is contributed by R95. The active-site Proton donor is the C119. At C119 the chain carries 2-(S-cysteinyl)pyruvic acid O-phosphothioketal. Residues 164-167 (KVSV), D308, and I330 each bind UDP-N-acetyl-alpha-D-glucosamine.

Belongs to the EPSP synthase family. MurA subfamily.

It localises to the cytoplasm. The catalysed reaction is phosphoenolpyruvate + UDP-N-acetyl-alpha-D-glucosamine = UDP-N-acetyl-3-O-(1-carboxyvinyl)-alpha-D-glucosamine + phosphate. The protein operates within cell wall biogenesis; peptidoglycan biosynthesis. Functionally, cell wall formation. Adds enolpyruvyl to UDP-N-acetylglucosamine. The polypeptide is UDP-N-acetylglucosamine 1-carboxyvinyltransferase (Rickettsia peacockii (strain Rustic)).